Reading from the N-terminus, the 611-residue chain is MWTHPISYDVIVVGAGHAGCEAAFCSAKMGASVLILTSNLDTIAKLSCNPAVGGIGKGHIVREIDALGGIMAEITDRSGIQFRILNQTKGPAVRAPRAQVDKQMYHIHMKRLLESTPGLHIMQGTVESLLDKENVIQGVTTKEGIAYLGKTVILSSGTFMRGLIHIGDRSFSGGRLGDPAATGLSAALKERGFPISRLKTGTPPRLLASSIDFSVTEEQPGDPGVGFVHRDEPFVPPLPQVSCYITHTTEKTKEIITANIRRSALYGGRIEGIGPRYCPSIEDKIVKFADKERHHIFIEPEGIYTQEVYVNGLSTSMPFDVQYEMIRSVRGLENAIITRPAYAIEYDYVHGNVIYPTLESKTIEGLFLCGQINGTTGYEEAAAQGLIAGINAVNKVLRKPDFIPSRQESYIGVMLDDLTTQVLDEPYRMFTGRAEHRLLLRQDNACLRLSHYGRDLGLLSKERYELFEHQKQIIEEEKLRLSKTFKKYGNSVVSLAKALCRPEVSYDTLREVFPEEVRDFGSILNASLEMEIKYAGYIERQKSLIHSLSKSENMTIPEDIDYQSISSLSLEAREKLAKFTPRTIGSASRISGIANADIQVLMVAVKKHAHK.

14-19 (GAGHAG) contacts FAD. Position 274-288 (274-288 (GPRYCPSIEDKIVKF)) interacts with NAD(+).

This sequence belongs to the MnmG family. In terms of assembly, homodimer. Heterotetramer of two MnmE and two MnmG subunits. Requires FAD as cofactor.

The protein resides in the cytoplasm. NAD-binding protein involved in the addition of a carboxymethylaminomethyl (cmnm) group at the wobble position (U34) of certain tRNAs, forming tRNA-cmnm(5)s(2)U34. This Chlamydia felis (strain Fe/C-56) (Chlamydophila felis) protein is tRNA uridine 5-carboxymethylaminomethyl modification enzyme MnmG.